Consider the following 229-residue polypeptide: MLSGLIQRFEEEKMKHNQERVEELSLVRVDDTISQPPRYAPSAPMPSSMPTVALEILDKAMSNTTGATQTQKAEKAAFASYAEAFRDDVRLRQIKRHVNEQISPKLKSDLGGLKKKRAIIHMTLLIAAVVALLTSVCTLSSDMSVAFKLNGTSAEIPQWFKSLNPMLGVVNLGATFLMMVCAKSERSLNQQIDMIKKEVMKKQSYNDAVRMSFTEFSSVPLDGFELPLT.

2 consecutive transmembrane segments (helical) span residues 119 to 139 (IIHM…VCTL) and 162 to 182 (SLNP…MVCA).

The protein belongs to the orbivirus NS3 family. In terms of assembly, forms homooligomers via coiled-coil motif. Interacts with host OPTN; this interaction inhibits innate immune response.

Its subcellular location is the host cell membrane. The protein resides in the host Golgi apparatus. In terms of biological role, plays a role in the inhibition of host innate immune response. Interacts with host OPTN and thus inhibits the recruitment of TBK1 to the host Golgi apparatus. In turn, downstream partner IRF3 cannot be activated and IFN-beta production is impaired. Its function is as follows. Facilitates viral particle release either by increasing plasma membrane permeability through a viroporin-like activity or by viral budding. This is Non-structural protein P8 (Segment-10) from Bluetongue virus 17 (isolate USA) (BTV 17).